The sequence spans 91 residues: Hepcidin-1 (91 aa).

The first 24 residues, 1–24 (MKLSNVFLAAVVILTCVCVFQITA), serve as a signal peptide directing secretion. Positions 25–64 (VPFIQQVQDEHHVESEELQENQHLTEAEHRQTDPLVLFRT) are excised as a propeptide. 4 disulfide bridges follow: C73–C89, C76–C79, C77–C85, and C80–C88.

This sequence belongs to the hepcidin family.

It is found in the secreted. In terms of biological role, seems to act as a signaling molecule involved in the maintenance of iron homeostasis. Seems to be required in conjunction with HFE to regulate both intestinal iron absorption and iron storage in macrophages. May also have antimicrobial activity. This chain is Hepcidin-1 (hamp1), found in Danio rerio (Zebrafish).